Here is a 177-residue protein sequence, read N- to C-terminus: Large ribosomal subunit protein uL6 (177 aa).

The protein belongs to the universal ribosomal protein uL6 family. Part of the 50S ribosomal subunit.

This protein binds to the 23S rRNA, and is important in its secondary structure. It is located near the subunit interface in the base of the L7/L12 stalk, and near the tRNA binding site of the peptidyltransferase center. In Rhodopseudomonas palustris (strain BisA53), this protein is Large ribosomal subunit protein uL6.